The sequence spans 281 residues: Ornithine lipid ester-linked acyl 2-hydroxylase (281 aa).

Over residues 1–24 the composition is skewed to polar residues; sequence MTESPLSAPAPTSNQSPAPEQTFG. A disordered region spans residues 1–29; the sequence is MTESPLSAPAPTSNQSPAPEQTFGTAGIA.

The protein belongs to the aspartyl/asparaginyl beta-hydroxylase family.

It catalyses the reaction an N(2)-[(3R)-3-(2-saturated-acyloxy)acyl]-L-ornithine lipid + 2-oxoglutarate + O2 = a 2-hydroxyornithine lipid + succinate + CO2. It functions in the pathway lipid metabolism. Functionally, involved in the biosynthesis of ornithine lipids (OLs), which are phosphorus-free membrane lipids. Catalyzes the hydroxylation at the 2 position of the secondary fatty acid of OL. Contributes to symbiotic performance and acid tolerance. The polypeptide is Ornithine lipid ester-linked acyl 2-hydroxylase (Rhizobium tropici).